The chain runs to 422 residues: Serine protease HTRA2, mitochondrial (422 aa).

The N-terminal 17 residues, 1-17 (MALRGSHRLQVILKRCI), are a transit peptide targeting the mitochondrion. A propeptide spanning residues 18–74 (ASPLFHSHAPNRRSSQPAIKGGEPNSNGNSGHDQQNGERKGKGWRRLVSFFVPFSLG) is cleaved from the precursor. The interval 24-56 (SHAPNRRSSQPAIKGGEPNSNGNSGHDQQNGER) is disordered. Residues 41 to 51 (PNSNGNSGHDQ) show a composition bias toward polar residues. Residues 64-82 (LVSFFVPFSLGAVVSAAVI) form a helical membrane-spanning segment. 2 consecutive short sequence motifs (IAP-binding) follow at residues 75-78 (AVVS) and 94-97 (SKMT). A serine protease region spans residues 139-302 (SNGSGFIIEQ…IPIDYVKVFL (164 aa)). Residues H157, D189, and S266 each act as charge relay system in the active site. The PDZ domain maps to 325–410 (MGITMLTLTP…NLDIVILRGV (86 aa)).

The protein belongs to the peptidase S1C family. As to quaternary structure, interacts with th/DIAP1 (via BIR 2 domain).

Its subcellular location is the mitochondrion intermembrane space. The protein resides in the mitochondrion membrane. It carries out the reaction Cleavage of non-polar aliphatic amino-acids at the P1 position, with a preference for Val, Ile and Met. At the P2 and P3 positions, Arg is selected most strongly with a secondary preference for other hydrophilic residues.. In terms of biological role, serine protease that shows proteolytic activity against a non-specific substrate beta-casein. Promotes or induces cell death either by direct binding to and inhibition of BIRC proteins (also called inhibitor of apoptosis proteins, IAPs), leading to an increase in caspase activity, or by a BIRC inhibition-independent, caspase-independent and serine protease activity-dependent mechanism. Can antagonize antiapoptotic activity of th/Diap1 by directly inducing the degradation of th/Diap1. This is Serine protease HTRA2, mitochondrial from Drosophila erecta (Fruit fly).